Reading from the N-terminus, the 55-residue chain is Large ribosomal subunit protein bL33 (55 aa).

It belongs to the bacterial ribosomal protein bL33 family.

This is Large ribosomal subunit protein bL33 from Aliivibrio salmonicida (strain LFI1238) (Vibrio salmonicida (strain LFI1238)).